A 582-amino-acid chain; its full sequence is Formate--tetrahydrofolate ligase (582 aa).

Thr65–Thr72 contributes to the ATP binding site.

Belongs to the formate--tetrahydrofolate ligase family.

It catalyses the reaction (6S)-5,6,7,8-tetrahydrofolate + formate + ATP = (6R)-10-formyltetrahydrofolate + ADP + phosphate. It participates in one-carbon metabolism; tetrahydrofolate interconversion. The chain is Formate--tetrahydrofolate ligase from Aliivibrio fischeri (strain ATCC 700601 / ES114) (Vibrio fischeri).